Reading from the N-terminus, the 319-residue chain is tRNA-modifying protein YgfZ (319 aa).

Folate is bound by residues Trp-27 and Trp-189.

Belongs to the tRNA-modifying YgfZ family.

The protein localises to the cytoplasm. Functionally, folate-binding protein involved in regulating the level of ATP-DnaA and in the modification of some tRNAs. It is probably a key factor in regulatory networks that act via tRNA modification, such as initiation of chromosomal replication. This chain is tRNA-modifying protein YgfZ, found in Buchnera aphidicola subsp. Schizaphis graminum (strain Sg).